Consider the following 496-residue polypeptide: FAD-linked oxidoreductase AFUA_1G00980 (496 aa).

The signal sequence occupies residues 1 to 21 (MRRATLIPLAIWVAGAAAAAA). N-linked (GlcNAc...) asparagine glycans are attached at residues Asn49, Asn122, Asn205, Asn258, Asn344, Asn351, Asn371, and Asn382. Residues 64–243 (MAPTYAVSVR…VEAVYQVTDL (180 aa)) form the FAD-binding PCMH-type domain.

It belongs to the oxygen-dependent FAD-linked oxidoreductase family. Requires FAD as cofactor.

Its function is as follows. FAD-linked oxidoreductase; part of the gene cluster that mediates the biosynthesis of fumigermin that inhibits germination of spores of the inducing S.rapamycinicus, and thus helps the fungus to defend resources in the shared habitat against a bacterial competitor. The partially reducing polyketide synthase fngA alone is sufficient for the production of fumigermin. FgnA catalyzes the condensation of 3 malonyl-CoA units to an acetyl-CoA starter, and 3 methylations to yield fumigermin. It is remarkable that the five cluster genes including fgnA are conserved in distantly related fungi, supporting the assumption of a fumigermin cluster; it is thus possible that originally all five genes were functional, but that the genes encoding tailoring enzymes became inactive from mutations, similar to the case of the fgnA gene in strains A1163 and Af293. In Aspergillus fumigatus (strain ATCC MYA-4609 / CBS 101355 / FGSC A1100 / Af293) (Neosartorya fumigata), this protein is FAD-linked oxidoreductase AFUA_1G00980.